Consider the following 187-residue polypeptide: Ribonuclease HII (187 aa).

One can recognise an RNase H type-2 domain in the interval 1–187 (MIILGIDEAG…YKPVQVLLNE (187 aa)). 3 residues coordinate a divalent metal cation: D7, E8, and D99.

It belongs to the RNase HII family. Requires Mn(2+) as cofactor. Mg(2+) is required as a cofactor.

The protein resides in the cytoplasm. The enzyme catalyses Endonucleolytic cleavage to 5'-phosphomonoester.. In terms of biological role, endonuclease that specifically degrades the RNA of RNA-DNA hybrids. This Francisella tularensis subsp. tularensis (strain FSC 198) protein is Ribonuclease HII.